We begin with the raw amino-acid sequence, 199 residues long: Potassium-transporting ATPase KdpC subunit 2 (199 aa).

Residues 13–33 (ITLIFWLVTAIIYPLAILVVG) form a helical membrane-spanning segment.

This sequence belongs to the KdpC family. The system is composed of three essential subunits: KdpA, KdpB and KdpC.

The protein resides in the cell inner membrane. Part of the high-affinity ATP-driven potassium transport (or Kdp) system, which catalyzes the hydrolysis of ATP coupled with the electrogenic transport of potassium into the cytoplasm. This subunit acts as a catalytic chaperone that increases the ATP-binding affinity of the ATP-hydrolyzing subunit KdpB by the formation of a transient KdpB/KdpC/ATP ternary complex. The chain is Potassium-transporting ATPase KdpC subunit 2 from Nostoc sp. (strain PCC 7120 / SAG 25.82 / UTEX 2576).